A 50-amino-acid polypeptide reads, in one-letter code: Large ribosomal subunit protein bL33 (50 aa).

The protein belongs to the bacterial ribosomal protein bL33 family.

The protein is Large ribosomal subunit protein bL33 of Sulfurovum sp. (strain NBC37-1).